The chain runs to 329 residues: L-arabinose-binding periplasmic protein (329 aa).

Residues 1–23 (MHKFTKALAAIGLAAVMSQSAMA) form the signal peptide.

Belongs to the bacterial solute-binding protein 2 family.

It localises to the periplasm. Involved in the high-affinity L-arabinose membrane transport system. Binds with high affinity to arabinose, but can also bind D-galactose (approximately 2-fold reduction) and D-fucose (approximately 40-fold reduction). This Escherichia coli (strain K12) protein is L-arabinose-binding periplasmic protein (araF).